The chain runs to 462 residues: GTPase Der (462 aa).

EngA-type G domains follow at residues 2-164 (KKIA…PKKE) and 195-366 (INVA…KNYS). Residues 8–15 (GKPNVGKS), 55–59 (DTGGI), 116–119 (NKID), 201–208 (GRVNVGKS), 248–252 (DTAGI), and 312–315 (NKWD) each bind GTP. The 85-residue stretch at 367 to 451 (TWLPTGQLNR…PIILRPRKRG (85 aa)) folds into the KH-like domain.

Belongs to the TRAFAC class TrmE-Era-EngA-EngB-Septin-like GTPase superfamily. EngA (Der) GTPase family. As to quaternary structure, associates with the 50S ribosomal subunit.

GTPase that plays an essential role in the late steps of ribosome biogenesis. In Nitratiruptor sp. (strain SB155-2), this protein is GTPase Der.